The sequence spans 475 residues: Flotillin-like protein 4 (475 aa).

Coiled coils occupy residues 235-255 and 305-325; these read ENQR…KKAA and QYET…KEAE.

Belongs to the band 7/mec-2 family. Flotillin subfamily. Expressed in roots and nodules. Primarily expressed in vascular tissues. Upon induction of nodulation, expansion of expression in the root cortex in the region of elongating root hairs, which will eventually become colonized by bacteria. Expressed in the infection zone in nodules.

The protein localises to the membrane. Its subcellular location is the caveola. The protein resides in the cell membrane. Functionally, may act as a scaffolding protein within caveolar membranes, functionally participating in formation of caveolae or caveolae-like vesicles. Required for normal infection threads initiation and elongation and nodulation. Probably involved in polar growth of the infection thread. The protein is Flotillin-like protein 4 (FLOT4) of Medicago truncatula (Barrel medic).